Here is a 129-residue protein sequence, read N- to C-terminus: Ribulose bisphosphate carboxylase small subunit (129 aa).

The span at 104–120 shows a compositional bias: basic and acidic residues; sequence ENEPSLRMTRTESDGRS. Residues 104 to 129 are disordered; the sequence is ENEPSLRMTRTESDGRSQHYTWETQR.

This sequence belongs to the RuBisCO small chain family. In terms of assembly, heterohexadecamer of 8 large and 8 small subunits.

RuBisCO catalyzes two reactions: the carboxylation of D-ribulose 1,5-bisphosphate, the primary event in carbon dioxide fixation, as well as the oxidative fragmentation of the pentose substrate. Both reactions occur simultaneously and in competition at the same active site. Although the small subunit is not catalytic it is essential for maximal activity. The sequence is that of Ribulose bisphosphate carboxylase small subunit from Sinorhizobium medicae (strain WSM419) (Ensifer medicae).